Here is a 442-residue protein sequence, read N- to C-terminus: tRNA-2-methylthio-N(6)-dimethylallyladenosine synthase (442 aa).

Positions K3–A118 constitute an MTTase N-terminal domain. Residues C12, C49, C81, C155, C159, and C162 each contribute to the [4Fe-4S] cluster site. The Radical SAM core domain occupies R141 to D374. Positions D377–V440 constitute a TRAM domain.

The protein belongs to the methylthiotransferase family. MiaB subfamily. In terms of assembly, monomer. [4Fe-4S] cluster serves as cofactor.

The protein resides in the cytoplasm. It catalyses the reaction N(6)-dimethylallyladenosine(37) in tRNA + (sulfur carrier)-SH + AH2 + 2 S-adenosyl-L-methionine = 2-methylsulfanyl-N(6)-dimethylallyladenosine(37) in tRNA + (sulfur carrier)-H + 5'-deoxyadenosine + L-methionine + A + S-adenosyl-L-homocysteine + 2 H(+). Its function is as follows. Catalyzes the methylthiolation of N6-(dimethylallyl)adenosine (i(6)A), leading to the formation of 2-methylthio-N6-(dimethylallyl)adenosine (ms(2)i(6)A) at position 37 in tRNAs that read codons beginning with uridine. This Delftia acidovorans (strain DSM 14801 / SPH-1) protein is tRNA-2-methylthio-N(6)-dimethylallyladenosine synthase.